The chain runs to 295 residues: MRHLITTKDFNKVEIMELFKEASDFLDEKPRTFLKGKSITTIFFENSTRTLSSFESAARRLGARVLRLDVSRSSSSKGETLYDTAANLDAMSPNAIVVRHANSGVPLILAKHIHCPVVNGGDGKHAHPTQALLDLFTIYNHFQGDVEGKKICIVGDIKNSRVAASNIELLSRFNLDITLVAPPHFMPNTHLKKHYKLDENIIANSDIIMSLRTQTERHNKTVYASLKDYANDFCIQKSLVKDKKLILLHPGPVNRNIDISDEMMSDERTLVLKQVKNGVAIRMAVLKKLILENEG.

The carbamoyl phosphate site is built by R49 and T50. K77 serves as a coordination point for L-aspartate. Residues R99, H127, and Q130 each contribute to the carbamoyl phosphate site. 2 residues coordinate L-aspartate: R161 and R212. The carbamoyl phosphate site is built by G251 and P252.

This sequence belongs to the aspartate/ornithine carbamoyltransferase superfamily. ATCase family. Heterododecamer (2C3:3R2) of six catalytic PyrB chains organized as two trimers (C3), and six regulatory PyrI chains organized as three dimers (R2).

The catalysed reaction is carbamoyl phosphate + L-aspartate = N-carbamoyl-L-aspartate + phosphate + H(+). It participates in pyrimidine metabolism; UMP biosynthesis via de novo pathway; (S)-dihydroorotate from bicarbonate: step 2/3. Its function is as follows. Catalyzes the condensation of carbamoyl phosphate and aspartate to form carbamoyl aspartate and inorganic phosphate, the committed step in the de novo pyrimidine nucleotide biosynthesis pathway. The sequence is that of Aspartate carbamoyltransferase catalytic subunit from Campylobacter jejuni subsp. jejuni serotype O:6 (strain 81116 / NCTC 11828).